The following is a 334-amino-acid chain: Protein translocase subunit SecF (334 aa).

6 helical membrane passes run 18–38, 144–164, 168–190, 195–217, 258–278, and 279–299; these read VAAG…AVTG, GAAM…AIRF, FGLA…IKIF, SLTV…IIIF, ATLA…WVMA, and FGVV…LLWI.

The protein belongs to the SecD/SecF family. SecF subfamily. Forms a complex with SecD. Part of the essential Sec protein translocation apparatus which comprises SecA, SecYEG and auxiliary proteins SecDF. Other proteins may also be involved.

It is found in the cell inner membrane. In terms of biological role, part of the Sec protein translocase complex. Interacts with the SecYEG preprotein conducting channel. SecDF uses the proton motive force (PMF) to complete protein translocation after the ATP-dependent function of SecA. The polypeptide is Protein translocase subunit SecF (Gemmatimonas aurantiaca (strain DSM 14586 / JCM 11422 / NBRC 100505 / T-27)).